Consider the following 280-residue polypeptide: Putative pyruvate, phosphate dikinase regulatory protein (280 aa).

158 to 165 (GVSRTSKT) lines the ADP pocket.

The protein belongs to the pyruvate, phosphate/water dikinase regulatory protein family. PDRP subfamily.

The catalysed reaction is N(tele)-phospho-L-histidyl/L-threonyl-[pyruvate, phosphate dikinase] + ADP = N(tele)-phospho-L-histidyl/O-phospho-L-threonyl-[pyruvate, phosphate dikinase] + AMP + H(+). It catalyses the reaction N(tele)-phospho-L-histidyl/O-phospho-L-threonyl-[pyruvate, phosphate dikinase] + phosphate + H(+) = N(tele)-phospho-L-histidyl/L-threonyl-[pyruvate, phosphate dikinase] + diphosphate. Functionally, bifunctional serine/threonine kinase and phosphorylase involved in the regulation of the pyruvate, phosphate dikinase (PPDK) by catalyzing its phosphorylation/dephosphorylation. This Lactobacillus johnsonii (strain CNCM I-12250 / La1 / NCC 533) protein is Putative pyruvate, phosphate dikinase regulatory protein.